The following is a 199-amino-acid chain: Ribosome maturation factor RimM (199 aa).

Residues 93 to 169 (DDEYYHADLI…IELPDEIDGE (77 aa)) enclose the PRC barrel domain. Residues 164-199 (DEIDGEDRASADESASAEDDAAAPNSARHPRESGDP) form a disordered region.

This sequence belongs to the RimM family. In terms of assembly, binds ribosomal protein uS19.

The protein localises to the cytoplasm. Functionally, an accessory protein needed during the final step in the assembly of 30S ribosomal subunit, possibly for assembly of the head region. Essential for efficient processing of 16S rRNA. May be needed both before and after RbfA during the maturation of 16S rRNA. It has affinity for free ribosomal 30S subunits but not for 70S ribosomes. This is Ribosome maturation factor RimM from Bradyrhizobium sp. (strain ORS 278).